A 309-amino-acid polypeptide reads, in one-letter code: Tyrosine recombinase XerD (309 aa).

The Core-binding (CB) domain occupies 3-88 (MRASLAIENF…ALRQFFRFLY (86 aa)). Residues 109–302 (PLPKIMSVEN…LEERLHKLVS (194 aa)) enclose the Tyr recombinase domain. Residues Arg158, Lys182, His254, Arg257, and His280 contribute to the active site. Catalysis depends on Tyr289, which acts as the O-(3'-phospho-DNA)-tyrosine intermediate.

Belongs to the 'phage' integrase family. XerD subfamily. Forms a cyclic heterotetrameric complex composed of two molecules of XerC and two molecules of XerD.

It is found in the cytoplasm. Its function is as follows. Site-specific tyrosine recombinase, which acts by catalyzing the cutting and rejoining of the recombining DNA molecules. The XerC-XerD complex is essential to convert dimers of the bacterial chromosome into monomers to permit their segregation at cell division. It also contributes to the segregational stability of plasmids. The protein is Tyrosine recombinase XerD of Brucella melitensis biotype 1 (strain ATCC 23456 / CCUG 17765 / NCTC 10094 / 16M).